The sequence spans 1148 residues: Putative transcription factor SEF1 (1148 aa).

The interval 1–51 (MVKDNRDSDQDQDFSSAHMKRQPEQQQLQQHQFPSKKQRISHHDDSHQINH) is disordered. Ser-8 carries the phosphoserine modification. The segment at residues 57–87 (CTHCRQHKIKCDASQNFPHPCSRCEKIGLHC) is a DNA-binding region (zn(2)-C6 fungal-type). The disordered stretch occupies residues 148 to 180 (PTPGTIIPNPDSSPSSGSPTSSAAQRDSKVSVQ). A compositionally biased stretch (low complexity) spans 150–169 (PGTIIPNPDSSPSSGSPTSS). A Phosphoserine modification is found at Ser-263. The interval 524–550 (EESEEDNNDSIDNNNNDKRNKKDEPHV) is disordered. Over residues 538–550 (NNDKRNKKDEPHV) the composition is skewed to basic and acidic residues. A Phosphoserine modification is found at Ser-806. Residues 1029-1050 (RSQSSMSHSRTPIASKSNNMTD) show a composition bias toward polar residues. Residues 1029–1063 (RSQSSMSHSRTPIASKSNNMTDLHSVVSDPGSSKS) form a disordered region.

Its subcellular location is the nucleus. Functionally, putative transcription factor that seems to be involved in the sporulation process. Suppresses the lethal phenotype of RPM2 deletion. This Saccharomyces cerevisiae (strain ATCC 204508 / S288c) (Baker's yeast) protein is Putative transcription factor SEF1 (SEF1).